We begin with the raw amino-acid sequence, 106 residues long: Large ribosomal subunit protein P1 (106 aa).

Positions 66–76 (AQPQATQAQPA) are enriched in low complexity. The disordered stretch occupies residues 66–106 (AQPQATQAQPAAEEKKEEKKEEEKKGPSEEEIASGLASLFG). The segment covering 77-93 (AEEKKEEKKEEEKKGPS) has biased composition (basic and acidic residues).

This sequence belongs to the eukaryotic ribosomal protein P1/P2 family. Part of the 50S ribosomal subunit. Homodimer, it forms part of the ribosomal stalk which helps the ribosome interact with GTP-bound translation factors. Forms a heptameric uL10/P0(P1)2(P1)2(P1)2 complex, where uL10/P0 forms an elongated spine to which the P1 dimers bind in a sequential fashion.

Forms part of the ribosomal stalk, playing a central role in the interaction of the ribosome with GTP-bound translation factors. The chain is Large ribosomal subunit protein P1 from Saccharolobus solfataricus (strain ATCC 35092 / DSM 1617 / JCM 11322 / P2) (Sulfolobus solfataricus).